A 415-amino-acid chain; its full sequence is L-cysteine:1D-myo-inositol 2-amino-2-deoxy-alpha-D-glucopyranoside ligase (415 aa).

C43 is a Zn(2+) binding site. L-cysteinyl-5'-AMP contacts are provided by residues 43–46 (CGIT), T58, and 81–83 (NIT). Residues 45–55 (ITPYDATHLGH) carry the 'HIGH' region motif. Positions 187 to 192 (ERGGDP) match the 'ERGGDP' region motif. W227 contributes to the L-cysteinyl-5'-AMP binding site. Zn(2+) is bound at residue C231. 249–251 (GSD) lines the L-cysteinyl-5'-AMP pocket. Residue H256 participates in Zn(2+) binding. I283 is a binding site for L-cysteinyl-5'-AMP. The short motif at 289–293 (KMSKS) is the 'KMSKS' region element.

This sequence belongs to the class-I aminoacyl-tRNA synthetase family. MshC subfamily. Monomer. The cofactor is Zn(2+).

The catalysed reaction is 1D-myo-inositol 2-amino-2-deoxy-alpha-D-glucopyranoside + L-cysteine + ATP = 1D-myo-inositol 2-(L-cysteinylamino)-2-deoxy-alpha-D-glucopyranoside + AMP + diphosphate + H(+). Functionally, catalyzes the ATP-dependent condensation of GlcN-Ins and L-cysteine to form L-Cys-GlcN-Ins. The sequence is that of L-cysteine:1D-myo-inositol 2-amino-2-deoxy-alpha-D-glucopyranoside ligase from Mycobacterium sp. (strain JLS).